Reading from the N-terminus, the 354-residue chain is Ferrochelatase (354 aa).

The Fe cation site is built by His214 and Glu295.

This sequence belongs to the ferrochelatase family.

It localises to the cytoplasm. The catalysed reaction is heme b + 2 H(+) = protoporphyrin IX + Fe(2+). The protein operates within porphyrin-containing compound metabolism; protoheme biosynthesis; protoheme from protoporphyrin-IX: step 1/1. Catalyzes the ferrous insertion into protoporphyrin IX. The sequence is that of Ferrochelatase from Burkholderia lata (strain ATCC 17760 / DSM 23089 / LMG 22485 / NCIMB 9086 / R18194 / 383).